A 262-amino-acid polypeptide reads, in one-letter code: Ribosomal RNA small subunit methyltransferase A (262 aa).

6 residues coordinate S-adenosyl-L-methionine: histidine 16, leucine 18, glycine 43, glutamate 64, aspartate 89, and asparagine 109.

It belongs to the class I-like SAM-binding methyltransferase superfamily. rRNA adenine N(6)-methyltransferase family. RsmA subfamily.

The protein resides in the cytoplasm. The enzyme catalyses adenosine(1518)/adenosine(1519) in 16S rRNA + 4 S-adenosyl-L-methionine = N(6)-dimethyladenosine(1518)/N(6)-dimethyladenosine(1519) in 16S rRNA + 4 S-adenosyl-L-homocysteine + 4 H(+). Functionally, specifically dimethylates two adjacent adenosines (A1518 and A1519) in the loop of a conserved hairpin near the 3'-end of 16S rRNA in the 30S particle. May play a critical role in biogenesis of 30S subunits. The protein is Ribosomal RNA small subunit methyltransferase A of Xanthomonas oryzae pv. oryzae (strain MAFF 311018).